Consider the following 201-residue polypeptide: Holliday junction branch migration complex subunit RuvA (201 aa).

The domain I stretch occupies residues Met1 to Val63. The segment at Glu64–Ser142 is domain II. The flexible linker stretch occupies residues Gly143 to Glu153. Residues Glu153 to Arg201 form a domain III region.

This sequence belongs to the RuvA family. Homotetramer. Forms an RuvA(8)-RuvB(12)-Holliday junction (HJ) complex. HJ DNA is sandwiched between 2 RuvA tetramers; dsDNA enters through RuvA and exits via RuvB. An RuvB hexamer assembles on each DNA strand where it exits the tetramer. Each RuvB hexamer is contacted by two RuvA subunits (via domain III) on 2 adjacent RuvB subunits; this complex drives branch migration. In the full resolvosome a probable DNA-RuvA(4)-RuvB(12)-RuvC(2) complex forms which resolves the HJ.

The protein resides in the cytoplasm. The RuvA-RuvB-RuvC complex processes Holliday junction (HJ) DNA during genetic recombination and DNA repair, while the RuvA-RuvB complex plays an important role in the rescue of blocked DNA replication forks via replication fork reversal (RFR). RuvA specifically binds to HJ cruciform DNA, conferring on it an open structure. The RuvB hexamer acts as an ATP-dependent pump, pulling dsDNA into and through the RuvAB complex. HJ branch migration allows RuvC to scan DNA until it finds its consensus sequence, where it cleaves and resolves the cruciform DNA. This chain is Holliday junction branch migration complex subunit RuvA, found in Cutibacterium acnes (strain DSM 16379 / KPA171202) (Propionibacterium acnes).